A 299-amino-acid polypeptide reads, in one-letter code: MMLIPTHHFRDIERKPEYLQPEKCAPPPFPGPVGTMWFIRDGCGIACAIVTWFLVLYAEFVVLFVMLIPSRDYAYSIINGIVFNLLAFLALASHCRAMLTDPGAVPKGNATKEFIESLQLKPGQVVYKCPKCCSIKPDRAHHCSVCKRCIRKMDHHCPWVNNCVGENNQKYFVLFTMYIALISLHALIMVGFHFLHCFEEDWTKCSSFSPPTTVILLILLCFEALLFLIFTSVMFGTQVHSICTDETGIEQLKKEERRWAKKTKWMNMKAVFGHPFSLGWASPFATPDQGKADPYQYVV.

Residues M1–C47 lie on the Cytoplasmic side of the membrane. Phosphotyrosine is present on Y18. The helical transmembrane segment at A48–I68 threads the bilayer. Residues P69–D72 lie on the Lumenal side of the membrane. The chain crosses the membrane as a helical span at residues Y73–S93. Over H94–Y171 the chain is Cytoplasmic. In terms of domain architecture, DHHC spans K128–K254. C146 carries the S-palmitoyl cysteine lipid modification. Catalysis depends on C157, which acts as the S-palmitoyl cysteine intermediate. A helical membrane pass occupies residues F172–F192. Residues H193 to V214 are Lumenal-facing. A helical membrane pass occupies residues I215 to F235. Residues G236–V299 are Cytoplasmic-facing.

This sequence belongs to the DHHC palmitoyltransferase family. Monomer. Homooligomers. The monomeric form has a higher catalytic activity. Forms heterooligomers with ZDHHC7. Interacts with TNFRSF10A. Post-translationally, phosphorylation by FGFR1 and SRC probably regulates the palmitoyltransferase activity. In terms of processing, autopalmitoylated.

It is found in the golgi apparatus membrane. The catalysed reaction is L-cysteinyl-[protein] + hexadecanoyl-CoA = S-hexadecanoyl-L-cysteinyl-[protein] + CoA. The enzyme catalyses L-cysteinyl-[protein] + tetradecanoyl-CoA = S-tetradecanoyl-L-cysteinyl-[protein] + CoA. It catalyses the reaction L-cysteinyl-[protein] + octadecanoyl-CoA = S-octadecanoyl-L-cysteinyl-[protein] + CoA. Functionally, golgi-localized palmitoyltransferase that catalyzes the addition of palmitate onto various protein substrates. Has no stringent fatty acid selectivity and in addition to palmitate can also transfer onto target proteins myristate from tetradecanoyl-CoA and stearate from octadecanoyl-CoA. Plays an important role in G protein-coupled receptor signaling pathways involving GNAQ and potentially other heterotrimeric G proteins by regulating their dynamic association with the plasma membrane. Palmitoylates ITGA6 and ITGB4, thereby regulating the alpha-6/beta-4 integrin localization, expression and function in cell adhesion to laminin. Plays a role in the TRAIL-activated apoptotic signaling pathway most probably through the palmitoylation and localization to the plasma membrane of TNFRSF10A. In the brain, by palmitoylating the gamma subunit GABRG2 of GABA(A) receptors and regulating their postsynaptic accumulation, plays a role in synaptic GABAergic inhibitory function and GABAergic innervation. Palmitoylates the neuronal protein GAP43 which is also involved in the formation of GABAergic synapses. Palmitoylates NCDN thereby regulating its association with endosome membranes. Probably palmitoylates PRCD and is involved in its proper localization within the photoreceptor. Could mediate the palmitoylation of NCAM1 and regulate neurite outgrowth. Could palmitoylate DNAJC5 and regulate its localization to Golgi membranes. Also constitutively palmitoylates DLG4. May also palmitoylate SNAP25. Could palmitoylate the glutamate receptors GRIA1 and GRIA2 but this has not been confirmed in vivo. Could also palmitoylate the D(2) dopamine receptor DRD2. May also palmitoylate LAMTOR1, promoting its localization to lysosomal membranes. Palmitoylates the Toll-like receptor 9/TLR9 in the Golgi and thereby regulates TLR9 trafficking to endosomes. May palmitoylate CALHM1 and CALHM3 subunits of gustatory voltage-gated ion channels and modulate channel gating and kinetics. The chain is Palmitoyltransferase ZDHHC3 from Rattus norvegicus (Rat).